Here is a 211-residue protein sequence, read N- to C-terminus: Arginine exporter protein ArgO (211 aa).

Transmembrane regions (helical) follow at residues 1-21 (MFSY…PLGP), 37-57 (IMIA…GIFG), 68-88 (LLAL…FGAF), 111-131 (IIAT…DTFV), 147-167 (WFAL…AILA), and 182-202 (IINL…ARDG).

Belongs to the LysE/ArgO transporter (TC 2.A.75) family.

It is found in the cell inner membrane. The catalysed reaction is L-arginine(in) = L-arginine(out). Involved in the export of arginine. Important to control the intracellular level of arginine and the correct balance between arginine and lysine. This chain is Arginine exporter protein ArgO, found in Escherichia coli O157:H7.